Reading from the N-terminus, the 318-residue chain is Probable cell division protein WhiA (318 aa).

A DNA-binding region (H-T-H motif) is located at residues 281 to 314; the sequence is SLKELGQMLVPPVGKSGVNHRLRKIEEISKKLKE.

This sequence belongs to the WhiA family.

Involved in cell division and chromosome segregation. The polypeptide is Probable cell division protein WhiA (Thermoanaerobacter sp. (strain X514)).